The following is a 99-amino-acid chain: Nucleoid-associated protein str1598 (99 aa).

Belongs to the YbaB/EbfC family. In terms of assembly, homodimer.

The protein localises to the cytoplasm. Its subcellular location is the nucleoid. In terms of biological role, binds to DNA and alters its conformation. May be involved in regulation of gene expression, nucleoid organization and DNA protection. This is Nucleoid-associated protein str1598 from Streptococcus thermophilus (strain CNRZ 1066).